A 575-amino-acid polypeptide reads, in one-letter code: Muellerian-inhibiting factor (575 aa).

A signal peptide spans 1 to 20; that stretch reads MQGPSLSQLVLVLMGALLEA. The propeptide occupies 21–466; that stretch reads GTPREEVSST…ERSGPARAQR (446 aa). Asn-78 and Asn-343 each carry an N-linked (GlcNAc...) asparagine glycan. Intrachain disulfides connect Cys-477-Cys-541, Cys-503-Cys-572, and Cys-507-Cys-574.

Belongs to the TGF-beta family. In terms of assembly, homodimer; disulfide-linked. Post-translationally, preproprotein is proteolytically processed to generate N- and C-terminal cleavage products that homodimerize and associate to form a biologically active non-covalent complex. Binding of the non-covalent complex to AMHR2 induces dissociation of the pro-region from the mature C-terminal dimer. The N-terminal portion of the protein, despite having no intrinsic activity, has the role of amplifying the activity of the C-terminus. In terms of tissue distribution, detected in fetal Sertoli cells. Expressed in granulosa cells of growing follicles but also in theca cells of preovulatory follicles and corpora lutea (at protein level).

Its subcellular location is the secreted. Functionally, plays an important role in several reproductive functions. Induces Muellerian duct regression during male fetal sexual differentiation and plays a role in Leydig cell differentiation and function. In female acts as a negative regulator of the primordial to primary follicle transition and decreases FSH sensitivity of growing follicles. AMH signals by binding to a specific type-II receptor, AMHR2, that heterodimerizes with type-I receptors (ACVR1 and BMPR1A), and recruiting SMAD proteins that are translocated to the nucleus to regulate target gene expression. The polypeptide is Muellerian-inhibiting factor (AMH) (Sus scrofa (Pig)).